A 232-amino-acid chain; its full sequence is Phosphatidylserine decarboxylase proenzyme (232 aa).

Ser190 (schiff-base intermediate with substrate; via pyruvic acid) is an active-site residue. The residue at position 190 (Ser190) is a Pyruvic acid (Ser); by autocatalysis.

Belongs to the phosphatidylserine decarboxylase family. PSD-A subfamily. As to quaternary structure, heterodimer of a large membrane-associated beta subunit and a small pyruvoyl-containing alpha subunit. The cofactor is pyruvate. In terms of processing, is synthesized initially as an inactive proenzyme. Formation of the active enzyme involves a self-maturation process in which the active site pyruvoyl group is generated from an internal serine residue via an autocatalytic post-translational modification. Two non-identical subunits are generated from the proenzyme in this reaction, and the pyruvate is formed at the N-terminus of the alpha chain, which is derived from the carboxyl end of the proenzyme. The post-translation cleavage follows an unusual pathway, termed non-hydrolytic serinolysis, in which the side chain hydroxyl group of the serine supplies its oxygen atom to form the C-terminus of the beta chain, while the remainder of the serine residue undergoes an oxidative deamination to produce ammonia and the pyruvoyl prosthetic group on the alpha chain.

The protein localises to the cell membrane. It catalyses the reaction a 1,2-diacyl-sn-glycero-3-phospho-L-serine + H(+) = a 1,2-diacyl-sn-glycero-3-phosphoethanolamine + CO2. It participates in phospholipid metabolism; phosphatidylethanolamine biosynthesis; phosphatidylethanolamine from CDP-diacylglycerol: step 2/2. Catalyzes the formation of phosphatidylethanolamine (PtdEtn) from phosphatidylserine (PtdSer). This is Phosphatidylserine decarboxylase proenzyme from Rhizobium etli (strain CIAT 652).